The primary structure comprises 354 residues: tRNA N6-adenosine threonylcarbamoyltransferase (354 aa).

Residues His-111 and His-115 each contribute to the Fe cation site. Substrate contacts are provided by residues 134–138 (LVSGG), Asp-167, Gly-180, and Asn-279. A Fe cation-binding site is contributed by Asp-319.

This sequence belongs to the KAE1 / TsaD family. Fe(2+) serves as cofactor.

It localises to the cytoplasm. The enzyme catalyses L-threonylcarbamoyladenylate + adenosine(37) in tRNA = N(6)-L-threonylcarbamoyladenosine(37) in tRNA + AMP + H(+). Required for the formation of a threonylcarbamoyl group on adenosine at position 37 (t(6)A37) in tRNAs that read codons beginning with adenine. Is involved in the transfer of the threonylcarbamoyl moiety of threonylcarbamoyl-AMP (TC-AMP) to the N6 group of A37, together with TsaE and TsaB. TsaD likely plays a direct catalytic role in this reaction. This Neisseria meningitidis serogroup C / serotype 2a (strain ATCC 700532 / DSM 15464 / FAM18) protein is tRNA N6-adenosine threonylcarbamoyltransferase.